The primary structure comprises 547 residues: Phenylalanine--tRNA ligase beta subunit (547 aa).

The B5 domain occupies 269 to 344 (LDVRFMEVDV…IGYGYENITP (76 aa)). Residues Asp-322, Asp-328, Glu-331, and Asp-332 each contribute to the Mg(2+) site.

The protein belongs to the phenylalanyl-tRNA synthetase beta subunit family. Type 2 subfamily. As to quaternary structure, tetramer of two alpha and two beta subunits. The cofactor is Mg(2+).

The protein localises to the cytoplasm. It catalyses the reaction tRNA(Phe) + L-phenylalanine + ATP = L-phenylalanyl-tRNA(Phe) + AMP + diphosphate + H(+). This chain is Phenylalanine--tRNA ligase beta subunit, found in Archaeoglobus fulgidus (strain ATCC 49558 / DSM 4304 / JCM 9628 / NBRC 100126 / VC-16).